The primary structure comprises 395 residues: Formate-dependent phosphoribosylglycinamide formyltransferase (395 aa).

Residues 22–23 (EL) and Glu-82 contribute to the N(1)-(5-phospho-beta-D-ribosyl)glycinamide site. ATP is bound by residues Arg-115, Lys-156, 161 to 166 (SSGKGQ), 196 to 199 (EGFI), and Glu-204. An ATP-grasp domain is found at 120–309 (RLAAETLGLP…EFALHARAIL (190 aa)). The Mg(2+) site is built by Glu-268 and Glu-280. Residues Asp-287, Lys-356, and 363–364 (RR) contribute to the N(1)-(5-phospho-beta-D-ribosyl)glycinamide site.

This sequence belongs to the PurK/PurT family. Homodimer.

It catalyses the reaction N(1)-(5-phospho-beta-D-ribosyl)glycinamide + formate + ATP = N(2)-formyl-N(1)-(5-phospho-beta-D-ribosyl)glycinamide + ADP + phosphate + H(+). The protein operates within purine metabolism; IMP biosynthesis via de novo pathway; N(2)-formyl-N(1)-(5-phospho-D-ribosyl)glycinamide from N(1)-(5-phospho-D-ribosyl)glycinamide (formate route): step 1/1. Functionally, involved in the de novo purine biosynthesis. Catalyzes the transfer of formate to 5-phospho-ribosyl-glycinamide (GAR), producing 5-phospho-ribosyl-N-formylglycinamide (FGAR). Formate is provided by PurU via hydrolysis of 10-formyl-tetrahydrofolate. This Stenotrophomonas maltophilia (strain K279a) protein is Formate-dependent phosphoribosylglycinamide formyltransferase.